Reading from the N-terminus, the 472-residue chain is Probable endopolygalacturonase D (472 aa).

The N-terminal stretch at 1-16 (MKRGALLVPFVPLALA) is a signal peptide. Residue N24 is glycosylated (N-linked (GlcNAc...) asparagine). C129 and C144 are disulfide-bonded. 3 PbH1 repeats span residues 236–258 (MYYSRIENLNIQNWPVHCFDIEH), 259–297 (TENLIISGITLDNSAGDAPNSASGSKPAAHNSDGFDIKS), and 298–319 (STNLTLQNSWVHNQDDCVAVSS). N300 carries N-linked (GlcNAc...) asparagine glycosylation. The active-site Proton donor is D312. The cysteines at positions 314 and 330 are disulfide-linked. The active site involves H334. PbH1 repeat units lie at residues 349–370 (VDGVTFSNSQVINSSNGCRIKS), 378–400 (VSNIRYENITVSGITDYGIDIQQ), 412–433 (TNGVKIENITFVDVTGTMSDGK), and 444–467 (CSNFVFENVGITGGSGDSCNYPTD). N-linked (GlcNAc...) asparagine glycosylation is found at N361, N385, and N419. 2 cysteine pairs are disulfide-bonded: C439–C444 and C462–C469.

It belongs to the glycosyl hydrolase 28 family.

Its subcellular location is the secreted. The enzyme catalyses (1,4-alpha-D-galacturonosyl)n+m + H2O = (1,4-alpha-D-galacturonosyl)n + (1,4-alpha-D-galacturonosyl)m.. Involved in maceration and soft-rotting of plant tissue. Hydrolyzes the 1,4-alpha glycosidic bonds of de-esterified pectate in the smooth region of the plant cell wall. In Neosartorya fischeri (strain ATCC 1020 / DSM 3700 / CBS 544.65 / FGSC A1164 / JCM 1740 / NRRL 181 / WB 181) (Aspergillus fischerianus), this protein is Probable endopolygalacturonase D (pgaD).